A 382-amino-acid chain; its full sequence is Cytochrome b (382 aa).

A run of 4 helical transmembrane segments spans residues 28–48 (YGFL…FLAS), 72–94 (WCFR…LHIL), 107–127 (SWIS…IGYV), and 169–189 (FFVL…IHIF). The heme b site is built by H78 and H92. Residues H173 and H187 each contribute to the heme b site. H192 is an a ubiquinone binding site. 4 consecutive transmembrane segments (helical) span residues 214 to 234 (LLSL…LQSI), 274 to 294 (IPSK…LFLL), 317 to 337 (VPMI…CQLP), and 340 to 360 (IFIL…LFAL).

This sequence belongs to the cytochrome b family. In terms of assembly, the main subunits of complex b-c1 are: cytochrome b, cytochrome c1 and the Rieske protein. Heme b serves as cofactor.

It is found in the mitochondrion inner membrane. Functionally, component of the ubiquinol-cytochrome c reductase complex (complex III or cytochrome b-c1 complex) that is part of the mitochondrial respiratory chain. The b-c1 complex mediates electron transfer from ubiquinol to cytochrome c. Contributes to the generation of a proton gradient across the mitochondrial membrane that is then used for ATP synthesis. The sequence is that of Cytochrome b (MT-CYB) from Plasmodium vivax (strain Salvador I).